The following is a 450-amino-acid chain: UDP-N-acetylmuramoylalanine--D-glutamate ligase (450 aa).

Residue 119–125 participates in ATP binding; the sequence is GSNGKTT.

It belongs to the MurCDEF family.

The protein localises to the cytoplasm. The catalysed reaction is UDP-N-acetyl-alpha-D-muramoyl-L-alanine + D-glutamate + ATP = UDP-N-acetyl-alpha-D-muramoyl-L-alanyl-D-glutamate + ADP + phosphate + H(+). It participates in cell wall biogenesis; peptidoglycan biosynthesis. Cell wall formation. Catalyzes the addition of glutamate to the nucleotide precursor UDP-N-acetylmuramoyl-L-alanine (UMA). In Streptococcus pneumoniae (strain JJA), this protein is UDP-N-acetylmuramoylalanine--D-glutamate ligase.